The chain runs to 562 residues: Berberine bridge enzyme-like C-1 (562 aa).

A signal peptide spans 1 to 19; the sequence is MFPLIILISFSFTFLSASA. N-linked (GlcNAc...) asparagine glycosylation is found at asparagine 29 and asparagine 41. Cysteine 33 and cysteine 90 are oxidised to a cystine. Residues 68–244 form the FAD-binding PCMH-type domain; it reads NMPKPTVIIL…YAWKIRLVKV (177 aa). Histidine 105 carries the pros-8alpha-FAD histidine modification. N-linked (GlcNAc...) asparagine glycosylation is found at asparagine 359, asparagine 498, and asparagine 558.

The protein belongs to the oxygen-dependent FAD-linked oxidoreductase family. FAD is required as a cofactor. Mostly expressed in roots.

The protein resides in the vacuole. It participates in alkaloid biosynthesis; nicotine biosynthesis. Functionally, involved in the biosynthesis of pyridine alkaloid natural products, leading mainly to the production of anabasine, anatabine, nicotine and nornicotine, effective deterrents against herbivores with antiparasitic and pesticide properties (neurotoxins); nornicotine serves as the precursor in the synthesis of the carcinogen compound N'-nitrosonornicotine (NNN). Catalyzes a late oxidation step subsequent to the pyridine ring condensation reaction in the biosynthesis of alkaloids. The polypeptide is Berberine bridge enzyme-like C-1 (Nicotiana tabacum (Common tobacco)).